A 332-amino-acid chain; its full sequence is Ribose-phosphate pyrophosphokinase (332 aa).

55–57 (DGE) contributes to the ATP binding site. Mg(2+) is bound by residues H148 and D187. The active site involves K211. D-ribose 5-phosphate is bound by residues R213, D237, and 241–245 (DTGGT).

This sequence belongs to the ribose-phosphate pyrophosphokinase family. Class I subfamily. Homohexamer. Mg(2+) serves as cofactor.

It is found in the cytoplasm. The enzyme catalyses D-ribose 5-phosphate + ATP = 5-phospho-alpha-D-ribose 1-diphosphate + AMP + H(+). Its pathway is metabolic intermediate biosynthesis; 5-phospho-alpha-D-ribose 1-diphosphate biosynthesis; 5-phospho-alpha-D-ribose 1-diphosphate from D-ribose 5-phosphate (route I): step 1/1. Its function is as follows. Involved in the biosynthesis of the central metabolite phospho-alpha-D-ribosyl-1-pyrophosphate (PRPP) via the transfer of pyrophosphoryl group from ATP to 1-hydroxyl of ribose-5-phosphate (Rib-5-P). In Prochlorococcus marinus (strain MIT 9313), this protein is Ribose-phosphate pyrophosphokinase.